We begin with the raw amino-acid sequence, 217 residues long: Elongation factor Ts (217 aa).

An involved in Mg(2+) ion dislocation from EF-Tu region spans residues 81 to 84 (TDFV).

The protein belongs to the EF-Ts family.

The protein resides in the cytoplasm. Its function is as follows. Associates with the EF-Tu.GDP complex and induces the exchange of GDP to GTP. It remains bound to the aminoacyl-tRNA.EF-Tu.GTP complex up to the GTP hydrolysis stage on the ribosome. The chain is Elongation factor Ts from Myxococcus xanthus (strain DK1622).